Here is a 388-residue protein sequence, read N- to C-terminus: N5-carboxyaminoimidazole ribonucleotide synthase (388 aa).

Residues Lys105, Lys140, 174–177 (ESFV), Glu182, and 267–268 (NE) each bind ATP. An ATP-grasp domain is found at 109 to 297 (RHFLQNLGLP…QFALQLQAVT (189 aa)).

Belongs to the PurK/PurT family. As to quaternary structure, homodimer.

It catalyses the reaction 5-amino-1-(5-phospho-beta-D-ribosyl)imidazole + hydrogencarbonate + ATP = 5-carboxyamino-1-(5-phospho-D-ribosyl)imidazole + ADP + phosphate + 2 H(+). It participates in purine metabolism; IMP biosynthesis via de novo pathway; 5-amino-1-(5-phospho-D-ribosyl)imidazole-4-carboxylate from 5-amino-1-(5-phospho-D-ribosyl)imidazole (N5-CAIR route): step 1/2. Catalyzes the ATP-dependent conversion of 5-aminoimidazole ribonucleotide (AIR) and HCO(3)(-) to N5-carboxyaminoimidazole ribonucleotide (N5-CAIR). This is N5-carboxyaminoimidazole ribonucleotide synthase from Synechocystis sp. (strain ATCC 27184 / PCC 6803 / Kazusa).